A 141-amino-acid chain; its full sequence is Hemoglobin subunit alpha-A (141 aa).

Positions 1-141 (VLSGPDKTNV…VGAVLTAKYR (141 aa)) constitute a Globin domain. His58 serves as a coordination point for O2. His87 serves as a coordination point for heme b.

It belongs to the globin family. In terms of assembly, heterotetramer of two alpha chains and two beta chains. Red blood cells.

Its function is as follows. Involved in oxygen transport from the lung to the various peripheral tissues. The protein is Hemoglobin subunit alpha-A (HBAA) of Rhea americana (Greater rhea).